The primary structure comprises 276 residues: CASP-like protein 4A3 (276 aa).

Residues 1 to 13 (MPSMSPSSISTEK) show a composition bias toward polar residues. A disordered region spans residues 1 to 76 (MPSMSPSSIS…PVKIEETPSP (76 aa)). The Cytoplasmic portion of the chain corresponds to 1 to 126 (MPSMSPSSIS…RRSRREEIVK (126 aa)). The segment covering 43–72 (SLDHSSDSEKEDEKRRPESRRNKNPVKIEE) has biased composition (basic and acidic residues). Residues 127-147 (FVALGFRLSEVVLALISFSIM) form a helical membrane-spanning segment. Over 148-167 (AADKTKGWSGDSFDRYKEYR) the chain is Extracellular. A helical membrane pass occupies residues 168-188 (FCLSVNVVAFIYASFQACDLA). Residues 189–205 (YHLVKEKHLISHHLRPL) lie on the Cytoplasmic side of the membrane. Residues 206-226 (FEFIIDQVLAYLLMCASTAAV) traverse the membrane as a helical segment. The Extracellular segment spans residues 227-244 (TRVDDWVSNWGKDDFTEM). A helical membrane pass occupies residues 245–265 (ASASIAMSFLTFLAFAFSSLI). Over 266 to 276 (SGYNLFNQDSL) the chain is Cytoplasmic.

It belongs to the Casparian strip membrane proteins (CASP) family. In terms of assembly, homodimer and heterodimers.

It is found in the cell membrane. This Arabidopsis lyrata subsp. lyrata (Lyre-leaved rock-cress) protein is CASP-like protein 4A3.